The following is a 193-amino-acid chain: Glycerol-3-phosphate acyltransferase (193 aa).

5 consecutive transmembrane segments (helical) span residues 2–22, 51–71, 78–98, 112–132, and 154–174; these read AFII…AVIV, QAAF…VLIA, GVSL…PVYF, VLLG…VIVV, and IIAG…LLIW.

It belongs to the PlsY family. Probably interacts with PlsX.

The protein localises to the cell inner membrane. The catalysed reaction is an acyl phosphate + sn-glycerol 3-phosphate = a 1-acyl-sn-glycero-3-phosphate + phosphate. It participates in lipid metabolism; phospholipid metabolism. In terms of biological role, catalyzes the transfer of an acyl group from acyl-phosphate (acyl-PO(4)) to glycerol-3-phosphate (G3P) to form lysophosphatidic acid (LPA). This enzyme utilizes acyl-phosphate as fatty acyl donor, but not acyl-CoA or acyl-ACP. The protein is Glycerol-3-phosphate acyltransferase of Coxiella burnetii (strain CbuG_Q212) (Coxiella burnetii (strain Q212)).